The sequence spans 332 residues: tRNA N6-adenosine threonylcarbamoyltransferase (332 aa).

Fe cation-binding residues include H108 and H112. Substrate contacts are provided by residues 129 to 133, D161, E178, and S258; that span reads LISGG. Residue D286 participates in Fe cation binding.

The protein belongs to the KAE1 / TsaD family. It depends on Fe(2+) as a cofactor.

The protein localises to the cytoplasm. It carries out the reaction L-threonylcarbamoyladenylate + adenosine(37) in tRNA = N(6)-L-threonylcarbamoyladenosine(37) in tRNA + AMP + H(+). Functionally, required for the formation of a threonylcarbamoyl group on adenosine at position 37 (t(6)A37) in tRNAs that read codons beginning with adenine. Is probably involved in the transfer of the threonylcarbamoyl moiety of threonylcarbamoyl-AMP (TC-AMP) to the N6 group of A37. This is tRNA N6-adenosine threonylcarbamoyltransferase from Pyrobaculum arsenaticum (strain DSM 13514 / JCM 11321 / PZ6).